The primary structure comprises 767 residues: ABC transporter B family member 4 (767 aa).

A disordered region spans residues 81–104; that stretch reads NYSSSSNSGNNNNNNYNNKNNNNN. The next 5 membrane-spanning stretches (helical) occupy residues 208–228, 252–272, 324–344, 350–370, and 429–449; these read IWLFGFGIITAFFSSWVGLQI, AIFILLAQAGLNFLYSTMISV, VSLGVKSFGQIVGGVISLILI, LGMMTILPTMVSVGTFYAGWL, and IGIFQGVTSLALNSVSLLVYW. Residues 211–491 enclose the ABC transmembrane type-1 domain; sequence FGFGIITAFF…LSILFTQIMS (281 aa). The ABC transporter domain maps to 524–760; that stretch reads IKFINVDFKY…KGLYYKLVQR (237 aa). 559 to 566 contacts ATP; sequence GSSGGGKS.

This sequence belongs to the ABC transporter superfamily. ABCB family. Multidrug resistance exporter (TC 3.A.1.201) subfamily.

It is found in the membrane. The polypeptide is ABC transporter B family member 4 (abcB4) (Dictyostelium discoideum (Social amoeba)).